We begin with the raw amino-acid sequence, 465 residues long: Glutamate--tRNA ligase (465 aa).

Positions 11-21 match the 'HIGH' region motif; the sequence is PSPTGFIHLGN. The disordered stretch occupies residues 118–139; it reads GEKPRYDGTWRPAPGKILPPPP. The short motif at 243–247 is the 'KMSKS' region element; sequence KMSKR. K246 lines the ATP pocket.

The protein belongs to the class-I aminoacyl-tRNA synthetase family. Glutamate--tRNA ligase type 1 subfamily. As to quaternary structure, monomer.

It is found in the cytoplasm. It carries out the reaction tRNA(Glu) + L-glutamate + ATP = L-glutamyl-tRNA(Glu) + AMP + diphosphate. Its function is as follows. Catalyzes the attachment of glutamate to tRNA(Glu) in a two-step reaction: glutamate is first activated by ATP to form Glu-AMP and then transferred to the acceptor end of tRNA(Glu). The protein is Glutamate--tRNA ligase of Ralstonia pickettii (strain 12J).